A 188-amino-acid chain; its full sequence is Cell division protein SepF (188 aa).

A compositionally biased stretch (polar residues) spans 152–162; sequence TSHDEASTPTV. Positions 152–188 are disordered; it reads TSHDEASTPTVVSRDAEAEQQQEAAAAPSPAWGATAL.

Belongs to the SepF family. As to quaternary structure, homodimer. Interacts with FtsZ.

The protein localises to the cytoplasm. Its function is as follows. Cell division protein that is part of the divisome complex and is recruited early to the Z-ring. Probably stimulates Z-ring formation, perhaps through the cross-linking of FtsZ protofilaments. Its function overlaps with FtsA. The chain is Cell division protein SepF from Parasynechococcus marenigrum (strain WH8102).